We begin with the raw amino-acid sequence, 123 residues long: Large ribosomal subunit protein uL18 (123 aa).

Belongs to the universal ribosomal protein uL18 family. In terms of assembly, part of the 50S ribosomal subunit; part of the 5S rRNA/L5/L18/L25 subcomplex. Contacts the 5S and 23S rRNAs.

Its function is as follows. This is one of the proteins that bind and probably mediate the attachment of the 5S RNA into the large ribosomal subunit, where it forms part of the central protuberance. The chain is Large ribosomal subunit protein uL18 from Desulforudis audaxviator (strain MP104C).